A 274-amino-acid chain; its full sequence is Large ribosomal subunit protein uL2 (274 aa).

The disordered stretch occupies residues 223 to 257; it reads VAMNPVDHPHGGGEGRTSGGRHPVTPWGIPTKGYK.

The protein belongs to the universal ribosomal protein uL2 family. As to quaternary structure, part of the 50S ribosomal subunit. Forms a bridge to the 30S subunit in the 70S ribosome.

One of the primary rRNA binding proteins. Required for association of the 30S and 50S subunits to form the 70S ribosome, for tRNA binding and peptide bond formation. It has been suggested to have peptidyltransferase activity; this is somewhat controversial. Makes several contacts with the 16S rRNA in the 70S ribosome. The sequence is that of Large ribosomal subunit protein uL2 from Geobacter sulfurreducens (strain ATCC 51573 / DSM 12127 / PCA).